Here is a 259-residue protein sequence, read N- to C-terminus: 7-cyano-7-deazaguanine synthase (259 aa).

32 to 42 provides a ligand contact to ATP; that stretch reads LSGGLDSVTCL. Zn(2+) is bound by residues C223, C233, C236, and C239.

This sequence belongs to the QueC family. Requires Zn(2+) as cofactor.

The catalysed reaction is 7-carboxy-7-deazaguanine + NH4(+) + ATP = 7-cyano-7-deazaguanine + ADP + phosphate + H2O + H(+). It functions in the pathway purine metabolism; 7-cyano-7-deazaguanine biosynthesis. Functionally, catalyzes the ATP-dependent conversion of 7-carboxy-7-deazaguanine (CDG) to 7-cyano-7-deazaguanine (preQ(0)). The protein is 7-cyano-7-deazaguanine synthase of Psychrobacter arcticus (strain DSM 17307 / VKM B-2377 / 273-4).